We begin with the raw amino-acid sequence, 98 residues long: Hainantoxin-XVII.3 (98 aa).

The first 40 residues, 1–40 (MTTVGVSLFRRSPEKITMKIATFLGLSFLLIASYFLICEA), serve as a signal peptide directing secretion. A propeptide spanning residues 41–64 (QHPGFQELLILEENMRDPENSKER) is cleaved from the precursor. Intrachain disulfides connect cysteine 66–cysteine 81, cysteine 73–cysteine 85, and cysteine 80–cysteine 95.

Belongs to the hainantoxin family. 17 subfamily. Expressed by the venom gland.

It localises to the secreted. Functionally, inhibits with low potency Kv1.2/KCNA2 and Kv1.3/KCNA3 voltage-gated potassium channels. This Cyriopagopus hainanus (Chinese bird spider) protein is Hainantoxin-XVII.3.